A 130-amino-acid chain; its full sequence is Acyl carrier protein 2, chloroplastic (130 aa).

A chloroplast-targeting transit peptide spans 1–48 (MASITGSSVSFKCAPLQSSFNSKNYALKSSVTFWRRTPVMPRGLSVSC). One can recognise a Carrier domain in the interval 52–127 (PEMVTKVSDI…EAADMIEALQ (76 aa)). The residue at position 87 (S87) is an O-(pantetheine 4'-phosphoryl)serine.

This sequence belongs to the acyl carrier protein (ACP) family. 4'-phosphopantetheine is transferred from CoA to a specific serine of apo-ACP by acpS. This modification is essential for activity because fatty acids are bound in thioester linkage to the sulfhydryl of the prosthetic group. Roots, leaves and seeds.

It is found in the plastid. The protein localises to the chloroplast. It participates in lipid metabolism; fatty acid biosynthesis. Its function is as follows. Carrier of the growing fatty acid chain in fatty acid biosynthesis. The sequence is that of Acyl carrier protein 2, chloroplastic (ACL1.2) from Spinacia oleracea (Spinach).